Reading from the N-terminus, the 340-residue chain is Glycerol-3-phosphate dehydrogenase [NAD(P)+] (340 aa).

Ser-14, Tyr-15, His-35, and Lys-109 together coordinate NADPH. Sn-glycerol 3-phosphate is bound by residues Lys-109, Gly-138, and Thr-140. Ala-142 lines the NADPH pocket. 5 residues coordinate sn-glycerol 3-phosphate: Lys-194, Asp-247, Ser-257, Arg-258, and Asn-259. Lys-194 acts as the Proton acceptor in catalysis. Arg-258 is an NADPH binding site. NADPH is bound by residues Val-282 and Glu-284.

This sequence belongs to the NAD-dependent glycerol-3-phosphate dehydrogenase family.

It is found in the cytoplasm. It catalyses the reaction sn-glycerol 3-phosphate + NAD(+) = dihydroxyacetone phosphate + NADH + H(+). The enzyme catalyses sn-glycerol 3-phosphate + NADP(+) = dihydroxyacetone phosphate + NADPH + H(+). It functions in the pathway membrane lipid metabolism; glycerophospholipid metabolism. Its function is as follows. Catalyzes the reduction of the glycolytic intermediate dihydroxyacetone phosphate (DHAP) to sn-glycerol 3-phosphate (G3P), the key precursor for phospholipid synthesis. This is Glycerol-3-phosphate dehydrogenase [NAD(P)+] from Photorhabdus laumondii subsp. laumondii (strain DSM 15139 / CIP 105565 / TT01) (Photorhabdus luminescens subsp. laumondii).